The sequence spans 127 residues: Urotensin-2 (127 aa).

A signal peptide spans 1–16 (MSKLFFCCLILAGSFC). The propeptide occupies 17–111 (SFRSLPIIVP…RLQSKDRKQF (95 aa)). Cys121 and Cys126 form a disulfide bridge.

Belongs to the urotensin-2 family. Central nervous system. Spinal cord.

Its subcellular location is the secreted. Functionally, involved in smooth muscle stimulating and ion mobilizing activities. It has a suggested role as a corticotropin-releasing factor. The chain is Urotensin-2 (UTS2) from Pelophylax ridibundus (Marsh frog).